Here is a 453-residue protein sequence, read N- to C-terminus: Bifunctional protein GlmU (453 aa).

Positions 1–226 (MVAIAILAAG…YEEILGINDR (226 aa)) are pyrophosphorylase. UDP-N-acetyl-alpha-D-glucosamine contacts are provided by residues 7-10 (LAAG), Lys-21, Gln-73, and 78-79 (GT). Asp-103 is a binding site for Mg(2+). UDP-N-acetyl-alpha-D-glucosamine is bound by residues Gly-140, Glu-155, Asn-170, and Asn-224. Asn-224 serves as a coordination point for Mg(2+). A linker region spans residues 227–247 (KQLALAYQILQNRIKDQAMAA). The N-acetyltransferase stretch occupies residues 248–453 (GVTLIDPDSI…GWRLKQPDPT (206 aa)). Residues Arg-329 and Lys-347 each contribute to the UDP-N-acetyl-alpha-D-glucosamine site. The active-site Proton acceptor is the His-359. Positions 362 and 373 each coordinate UDP-N-acetyl-alpha-D-glucosamine. Acetyl-CoA is bound by residues Ala-376, 382–383 (NY), Ser-401, Ala-419, and Arg-436.

In the N-terminal section; belongs to the N-acetylglucosamine-1-phosphate uridyltransferase family. This sequence in the C-terminal section; belongs to the transferase hexapeptide repeat family. As to quaternary structure, homotrimer. Mg(2+) serves as cofactor.

It is found in the cytoplasm. It catalyses the reaction alpha-D-glucosamine 1-phosphate + acetyl-CoA = N-acetyl-alpha-D-glucosamine 1-phosphate + CoA + H(+). The enzyme catalyses N-acetyl-alpha-D-glucosamine 1-phosphate + UTP + H(+) = UDP-N-acetyl-alpha-D-glucosamine + diphosphate. The protein operates within nucleotide-sugar biosynthesis; UDP-N-acetyl-alpha-D-glucosamine biosynthesis; N-acetyl-alpha-D-glucosamine 1-phosphate from alpha-D-glucosamine 6-phosphate (route II): step 2/2. Its pathway is nucleotide-sugar biosynthesis; UDP-N-acetyl-alpha-D-glucosamine biosynthesis; UDP-N-acetyl-alpha-D-glucosamine from N-acetyl-alpha-D-glucosamine 1-phosphate: step 1/1. It functions in the pathway bacterial outer membrane biogenesis; LPS lipid A biosynthesis. In terms of biological role, catalyzes the last two sequential reactions in the de novo biosynthetic pathway for UDP-N-acetylglucosamine (UDP-GlcNAc). The C-terminal domain catalyzes the transfer of acetyl group from acetyl coenzyme A to glucosamine-1-phosphate (GlcN-1-P) to produce N-acetylglucosamine-1-phosphate (GlcNAc-1-P), which is converted into UDP-GlcNAc by the transfer of uridine 5-monophosphate (from uridine 5-triphosphate), a reaction catalyzed by the N-terminal domain. The sequence is that of Bifunctional protein GlmU from Cyanothece sp. (strain PCC 7425 / ATCC 29141).